The chain runs to 406 residues: MIQNSDSATATLLPRKKERASGPVSVLAIGSANPPNVFHQSLFPDFYFNITQSNHMAEVKAKFTRMCAKSGIKKRRMHINEDILEAHPSIRSYHDNSLDVRQDMLVEEVPKLGKVAADNAIAEWGQPKSNITHLIFCTSSGIDMPGADWALMKLLGLRPTVNRVMVYQQGCFAGCTVLRIAKDLAENNKGSRILVVCSELTLISFRGPTEDHPENLVGQALFGDGAAALIVGADPIPHAENASFEIHWARSSVVPDSDDAVTGNIKENGLVLHLSKTIPDLIGQNIHTLLKDALEEMFDACNPSSFNDLFWVIHPGGPAILDAVEEELNLKSERTHASREILSQYGNMVSPGVLFVLDYMRKRSVDERLSTTGEGLEWGVMLGFGPGLTVETLILKSVPTQAFKYF.

The active site involves cysteine 171.

This sequence belongs to the thiolase-like superfamily. Chalcone/stilbene synthases family.

The catalysed reaction is 3-methylbutanoyl-CoA + 3 malonyl-CoA + 3 H(+) = phlorisovalerophenone + 3 CO2 + 4 CoA. In terms of biological role, produces 3-methyl-1-(2,4,6-trihydroxyphenyl)butan-1-one (phloroisovalerophenone). In Psilotum nudum (Whisk fern), this protein is Phloroisovalerophenone synthase (VPS).